Consider the following 566-residue polypeptide: Phenylalanine--tRNA ligase beta subunit (566 aa).

Residues 287–362 (YFQEEVEFDV…IGEGLASFYP (76 aa)) enclose the B5 domain. Residues aspartate 340, aspartate 346, glutamate 349, and aspartate 350 each coordinate Mg(2+).

Belongs to the phenylalanyl-tRNA synthetase beta subunit family. Type 2 subfamily. Tetramer of two alpha and two beta subunits. Mg(2+) is required as a cofactor.

It localises to the cytoplasm. The enzyme catalyses tRNA(Phe) + L-phenylalanine + ATP = L-phenylalanyl-tRNA(Phe) + AMP + diphosphate + H(+). The chain is Phenylalanine--tRNA ligase beta subunit from Borrelia garinii subsp. bavariensis (strain ATCC BAA-2496 / DSM 23469 / PBi) (Borreliella bavariensis).